The sequence spans 703 residues: Metastasis-associated protein MTA1 (703 aa).

Residues 1–164 (MAANMYRVGD…PQQKTLLADK (164 aa)) enclose the BAH domain. Residues 165-276 (GEIRVGNRYQ…KAISALVPQG (112 aa)) enclose the ELM2 domain. A Glycyl lysine isopeptide (Lys-Gly) (interchain with G-Cter in ubiquitin) cross-link involves residue lysine 182. Residues 283–335 (DEMEEWSASEANLFEEALEKYGKDFTDIQQDFLPWKSLTSIIEYYYMWKTTDR) enclose the SANT domain. A Phosphoserine modification is found at serine 386. The GATA-type; atypical zinc finger occupies 393 to 420 (CESCYTTQSYQWYSWGPPNMQCRLCASC). The segment at 437 to 460 (DGERPGPNRNNMSPHGIPARSSGS) is disordered. Serine 449 is modified (phosphoserine). Lysine 509 is covalently cross-linked (Glycyl lysine isopeptide (Lys-Gly) (interchain with G-Cter in SUMO2 and SUMO3)). Serine 522 bears the Phosphoserine mark. Basic and acidic residues predominate over residues 542–552 (ETHPRPPKPDP). The interval 542–583 (ETHPRPPKPDPVKSSSSVLSSLTPAKSAPVINNGSPTILGKR) is disordered. The SH3-binding signature appears at 545-552 (PRPPKPDP). Lysine 549 is covalently cross-linked (Glycyl lysine isopeptide (Lys-Gly) (interchain with G-Cter in SUMO2)). A compositionally biased stretch (low complexity) spans 553 to 565 (VKSSSSVLSSLTP). The residue at position 564 (threonine 564) is a Phosphothreonine. Serine 576 carries the post-translational modification Phosphoserine. At threonine 578 the chain carries Phosphothreonine. N6-acetyllysine; alternate is present on lysine 614. A Glycyl lysine isopeptide (Lys-Gly) (interchain with G-Cter in ubiquitin); alternate cross-link involves residue lysine 614. At serine 627 the chain carries Phosphoserine. An interaction with RBBP4 region spans residues 644-674 (DVFYMATEETRKIRKLLSSSETKRAARRPYK). Positions 661–703 (SSSETKRAARRPYKPIALRQSQALPLRPPPPAPVNDEPIVIED) are disordered. The SH3-binding motif lies at 684 to 693 (LPLRPPPPAP). The SUMO interaction motif 1 (SIM); crucial for efficient sumoylation signature appears at 699 to 703 (IVIED).

It belongs to the metastasis-associated protein family. In terms of assembly, component of the nucleosome remodeling and deacetylase (NuRD) repressor complex, composed of core proteins MTA1, MTA2, MTA3, RBBP4, RBBP7, HDAC1, HDAC2, MBD2, MBD3, and peripherally associated proteins CDK2AP1, CDK2AP2, GATAD2A, GATAD2B, CHD3, CHD4 and CHD5. The exact stoichiometry of the NuRD complex is unknown, and some subunits such as MBD2 and MBD3, GATAD2A and GATAD2B, and CHD3, CHD4 and CHD5 define mutually exclusive NuRD complexes. Interacts with RBBP4; the interaction is direct. Interacts with BMAL1. Interacts with CLOCK. Interacts with COP1. Interacts with CSNK1G2 in the cytoplasm. Interacts with EP300. Interacts with HDAC2. Interacts with ITGB3BP/CENPR. Interacts with MBD3L2. Interacts with MDM2. Interacts with NACC2. Interacts with p53/TP53. Interacts with PIAS1. Interacts with PIAS3. Interacts with PIAS4. Interacts with PWWP2A. Interacts with PWWP2B. Interacts with SENP1. Interacts with SENP2. Interacts with SIX3; facilitates the binding of SIX3 to the core DNA motif of SIX3 promoter. Interacts with SUMO1. Interacts with SUMO2. Interacts with TFCP2L1; which is indispensable for TFCP2L1-mediated self-renewal-promoting effect and endoderm-inhibiting action. Interacts with TFAP2C. Interacts with TPR. Interacts with UBE2I/UBC9. In terms of processing, phosphorylation by CSNK1G2/CK1 triggered by estrogen enhances corepression of estrogen receptor (ER). Post-translationally, acetylation is essential for its transcriptional coactivator activity. Sumoylation positively regulates its transcriptional corepressor activity but does not affect the protein stability. Sumoylated preferentially by SUMO2 or SUMO3 than SUMO1. Sumoylation is enhanced by PIAS1/3/4 and preferentially sumoylated by SUMO2 in the presence of PIAS1/3/4. Desumoylated by SENP1. In terms of processing, ubiquitinated by COP1, which leads to proteasomal degradation. Isoform 1 abundant in testis and expressed at low levels in brain, heart, lung, liver, and kidney. Isoform 2 abundant in adrenal gland, brain, colon, heart, liver, lung, muscle, prostate, stomach, testis, and thymus and expressed at low levels in duodenum, kidney, pancreas, parotid, and spleen.

It localises to the nucleus. Its subcellular location is the nucleus envelope. It is found in the cytoplasm. The protein localises to the cytoskeleton. The protein resides in the rough endoplasmic reticulum. It localises to the golgi apparatus. Its subcellular location is the zymogen granule. In terms of biological role, transcriptional coregulator which can act as both a transcriptional corepressor and coactivator. Acts as a component of the histone deacetylase NuRD complex which participates in the remodeling of chromatin. In the NuRD complex, regulates transcription of its targets by modifying the acetylation status of the target chromatin and cofactor accessibility to the target DNA. In conjunction with other components of NuRD, acts as a transcriptional corepressor of BRCA1, ESR1, TFF1 and CDKN1A. Acts as a transcriptional coactivator of BCAS3, and SUMO2, independent of the NuRD complex. Stimulates the expression of WNT1 by inhibiting the expression of its transcriptional corepressor SIX3. Regulates p53-dependent and -independent DNA repair processes following genotoxic stress. Regulates the stability and function of p53/TP53 by inhibiting its ubiquitination by COP1 and MDM2 thereby regulating the p53-dependent DNA repair. Plays a role in the regulation of the circadian clock and is essential for the generation and maintenance of circadian rhythms under constant light and for normal entrainment of behavior to light-dark (LD) cycles. Positively regulates the CLOCK-BMAL1 heterodimer mediated transcriptional activation of its own transcription and the transcription of CRY1. Regulates deacetylation of BMAL1 by regulating SIRT1 expression, resulting in derepressing CRY1-mediated transcription repression. With TFCP2L1, promotes establishment and maintenance of pluripotency in embryonic stem cells (ESCs) and inhibits endoderm differentiation. This Rattus norvegicus (Rat) protein is Metastasis-associated protein MTA1 (Mta1).